The primary structure comprises 196 residues: dTTP/UTP pyrophosphatase (196 aa).

Catalysis depends on D72, which acts as the Proton acceptor.

The protein belongs to the Maf family. YhdE subfamily. It depends on a divalent metal cation as a cofactor.

The protein localises to the cytoplasm. The enzyme catalyses dTTP + H2O = dTMP + diphosphate + H(+). It catalyses the reaction UTP + H2O = UMP + diphosphate + H(+). Functionally, nucleoside triphosphate pyrophosphatase that hydrolyzes dTTP and UTP. May have a dual role in cell division arrest and in preventing the incorporation of modified nucleotides into cellular nucleic acids. The polypeptide is dTTP/UTP pyrophosphatase (Chlamydia caviae (strain ATCC VR-813 / DSM 19441 / 03DC25 / GPIC) (Chlamydophila caviae)).